The primary structure comprises 273 residues: HUWE1-associated protein modifying stress responses 2 (273 aa).

Disordered stretches follow at residues 146 to 181 (GKVP…SSSV), 204 to 230 (ISMR…FLED), and 251 to 273 (KRTS…NRMV). Residues 149–165 (PPAPPPPRTPRTPPKPP) are compositionally biased toward pro residues. Polar residues-rich tracts occupy residues 170–181 (SQAVATESSSSV), 208–218 (SGDSPQDSGVA), and 254–267 (SAQC…SPIQ). The tract at residues 249–273 (IRKRTSAQCSDGITDSPIQKRNRMV) is nuclear localization signal.

This sequence belongs to the HAPSTR1 family. Homooligomer. Heterooligomer with HAPSTR1; the interaction is direct and stabilizes HAPSTR1 independently of HUWE1. Interacts with HUWE1. As to expression, expressed in a tissue-restricted manner compared to HAPSTR1.

It localises to the nucleus. Functionally, together with HAPSTR1 plays a central regulatory role in the cellular response to molecular stressors, such as DNA damage, nutrient scarcity, and protein misfolding. Regulates these multiple stress response signaling pathways by stabilizing HAPSTR1, but also independently of HAPSTR1. The polypeptide is HUWE1-associated protein modifying stress responses 2 (Homo sapiens (Human)).